Reading from the N-terminus, the 450-residue chain is Divalent metal cation transporter MntH (450 aa).

11 helical membrane-spanning segments follow: residues 34–54 (LSFLGPGLLVAVGYMDPGNWI), 61–81 (AQYGYTLLFVILISSLSAMLL), 108–128 (IAIIFWIIAELAIIATDIAEV), 141–161 (IPLIVGALITVLDVFLLLFIM), 170–190 (AIVGTLIFTVLFIFIFEVYIS), 212–232 (GILYIALGIIGATIMPHNLYL), 263–283 (IQLSIAFVVNCLLLVLGASLF), 305–325 (PVLGATMGAIMSTLFAVALLA), 361–381 (SLAVIPVIVCLSIFKGNAAKI), 383–403 (QLLVFSQVFLSIALPFCLIPL), and 422–442 (VNIISWTLIIILSILNVYLIV).

It belongs to the NRAMP family.

It is found in the cell membrane. Its function is as follows. H(+)-stimulated, divalent metal cation uptake system. This Staphylococcus aureus (strain bovine RF122 / ET3-1) protein is Divalent metal cation transporter MntH.